An 800-amino-acid chain; its full sequence is Protein MICRORCHIDIA 4 (800 aa).

2 disordered regions span residues 1–76 (MEPI…ARSD) and 552–702 (AKRQ…RTLS). Positions 9 to 18 (NPVTTSTLST) are enriched in polar residues. A compositionally biased stretch (low complexity) spans 36-47 (ELSSSNEGSELG). Basic and acidic residues-rich tracts occupy residues 559-578 (SAKD…EFDP) and 628-641 (VSKD…EKGG). Acidic residues predominate over residues 666–675 (NSDDDYDCDS). Positions 699–766 (RTLSQLEQEN…QASLIDVFAE (68 aa)) form a coiled coil. 2 short sequence motifs (nuclear localization signal) span residues 716–723 (DKKEEVFL) and 735–742 (LRKTLEAE).

The protein belongs to the MORC ATPase protein family. As to quaternary structure, homodimer and heterodimer. Component of an RNA-directed DNA methylation (RdDM) complex. Forms homomeric complexes. Mg(2+) serves as cofactor. It depends on Mn(2+) as a cofactor.

It localises to the nucleus. Exhibits ATPase activity. Binds DNA/RNA in a non-specific manner and exhibits endonuclease activity. Probably involved in DNA repair. Involved in RNA-directed DNA methylation (RdDM) as a component of the RdDM machinery and required for gene silencing. May also be involved in the regulation of chromatin architecture to maintain gene silencing. Together with MORC7, acts to suppress a wide set of non-methylated protein-coding genes, especially involved in pathogen response. Positive regulator of defense against the oomycete Hyaloperonospora arabidopsidis (Hpa). The sequence is that of Protein MICRORCHIDIA 4 from Arabidopsis thaliana (Mouse-ear cress).